A 138-amino-acid chain; its full sequence is Augmin complex subunit msd1 (138 aa).

In terms of assembly, component of the augmin complex composed of dgt2, dgt3, dgt4, dgt5, dgt6, msd1, msd5 and wac. The complex interacts directly or indirectly with microtubules and is required for centrosome-independent generation of spindle microtubules.

It localises to the cytoplasm. The protein resides in the cytoskeleton. Its subcellular location is the spindle. As part of the augmin complex, plays a role in centrosome-independent generation of spindle microtubules. The complex is required for mitotic spindle assembly through its involvement in localizing gamma-tubulin to spindle microtubules. msd1 is required for microtubule nucleation from within the mitotic spindle and for localization of Grip71 to centrosomes and mitotic spindle. This chain is Augmin complex subunit msd1, found in Drosophila melanogaster (Fruit fly).